The chain runs to 88 residues: UPF0213 protein EF_2693 (88 aa).

The 78-residue stretch at 5-82 folds into the GIY-YIG domain; the sequence is KSHYFYVLLC…KKLTRKQKEQ (78 aa).

It belongs to the UPF0213 family.

This chain is UPF0213 protein EF_2693, found in Enterococcus faecalis (strain ATCC 700802 / V583).